Reading from the N-terminus, the 420-residue chain is Interleukin-5 receptor subunit alpha (420 aa).

The N-terminal stretch at 1-20 (MIIVAHVLLILLGATEILQA) is a signal peptide. Over 21 to 342 (DLLPDEKISL…NDEHKPLREW (322 aa)) the chain is Extracellular. One can recognise a Fibronectin type-III 1 domain in the interval 32–123 (PPVNFTIKVT…ASAELHAPPG (92 aa)). Residues Asn-35 and Asn-131 are each glycosylated (N-linked (GlcNAc...) asparagine). Cystine bridges form between Cys-134-Cys-155 and Cys-182-Cys-196. 2 N-linked (GlcNAc...) asparagine glycosylation sites follow: Asn-216 and Asn-244. Positions 241–334 (PPLNVTAEIE…WSQPIYVGND (94 aa)) constitute a Fibronectin type-III 2 domain. Cysteines 269 and 316 form a disulfide. A WSXWS motif motif is present at residues 322 to 326 (WSEWS). The helical transmembrane segment at 343–362 (FVIVIMATICFILLILSLIC) threads the bilayer. The Cytoplasmic segment spans residues 363–420 (KICHLWIKLFPPIPAPKSNIKDLFVTTNYEKAGSSETEIEVICYIEKPGVETLEDSVF). The Box 1 motif signature appears at 371–379 (LFPPIPAPK).

Belongs to the type I cytokine receptor family. Type 5 subfamily. As to quaternary structure, interacts with IL5. Interacts with CSF2RB. Interacts with JAK2. Interacts with SDCBP. As to expression, expressed on eosinophils and basophils.

The protein localises to the membrane. Cell surface receptor that plays an important role in the survival, differentiation, and chemotaxis of eosinophils. Acts by forming a heterodimeric receptor with CSF2RB subunit and subsequently binding to interleukin-5. In unstimulated conditions, interacts constitutively with JAK2. Heterodimeric receptor activation leads to JAK2 stimulation and subsequent activation of the JAK-STAT pathway. The chain is Interleukin-5 receptor subunit alpha (IL5RA) from Homo sapiens (Human).